Reading from the N-terminus, the 139-residue chain is Oocyte zinc finger protein XlCOF14 (139 aa).

C2H2-type zinc fingers lie at residues 6-28, 33-55, 61-83, 89-111, and 117-139; these read FICS…SNVH, FPCT…QKIH, HKCT…HLSH, FSCF…QLSH, and FVCS…CHIH.

This sequence belongs to the krueppel C2H2-type zinc-finger protein family.

The protein resides in the nucleus. Its function is as follows. May be involved in transcriptional regulation. The chain is Oocyte zinc finger protein XlCOF14 from Xenopus laevis (African clawed frog).